The primary structure comprises 491 residues: Anthranilate synthase component 1 (491 aa).

Residues Ser49 and 271-273 contribute to the L-tryptophan site; that span reads PYL. 306 to 307 is a chorismate binding site; the sequence is GT. Mg(2+) is bound at residue Glu333. Residues Tyr421, Arg441, 455–457, and Gly457 each bind chorismate; that span reads GAG. Glu470 is a binding site for Mg(2+).

The protein belongs to the anthranilate synthase component I family. Heterotetramer consisting of two non-identical subunits: a beta subunit (TrpG) and a large alpha subunit (TrpE). It depends on Mg(2+) as a cofactor.

The catalysed reaction is chorismate + L-glutamine = anthranilate + pyruvate + L-glutamate + H(+). Its pathway is amino-acid biosynthesis; L-tryptophan biosynthesis; L-tryptophan from chorismate: step 1/5. Its activity is regulated as follows. Feedback inhibited by tryptophan. In terms of biological role, part of a heterotetrameric complex that catalyzes the two-step biosynthesis of anthranilate, an intermediate in the biosynthesis of L-tryptophan. In the first step, the glutamine-binding beta subunit (TrpG) of anthranilate synthase (AS) provides the glutamine amidotransferase activity which generates ammonia as a substrate that, along with chorismate, is used in the second step, catalyzed by the large alpha subunit of AS (TrpE) to produce anthranilate. In the absence of TrpG, TrpE can synthesize anthranilate directly from chorismate and high concentrations of ammonia. The chain is Anthranilate synthase component 1 (trpE) from Neisseria gonorrhoeae (strain ATCC 700825 / FA 1090).